Consider the following 662-residue polypeptide: UvrABC system protein B (662 aa).

The Helicase ATP-binding domain occupies 25-182 (KGIEKGEKFQ…KKLVEIQYER (158 aa)). 38-45 (GVTGSGKT) contributes to the ATP binding site. Residues 91-114 (YYDYYQPEAYVAQSDTYIEKDASI) carry the Beta-hairpin motif. The 167-residue stretch at 429–595 (QIDDLYTSIQ…TIIKDIREVI (167 aa)) folds into the Helicase C-terminal domain. A UVR domain is found at 622–657 (DKLIEKYEEEMREAAQNLQFEKAAHLRDVIYKLKRD).

The protein belongs to the UvrB family. As to quaternary structure, forms a heterotetramer with UvrA during the search for lesions. Interacts with UvrC in an incision complex.

The protein localises to the cytoplasm. Functionally, the UvrABC repair system catalyzes the recognition and processing of DNA lesions. A damage recognition complex composed of 2 UvrA and 2 UvrB subunits scans DNA for abnormalities. Upon binding of the UvrA(2)B(2) complex to a putative damaged site, the DNA wraps around one UvrB monomer. DNA wrap is dependent on ATP binding by UvrB and probably causes local melting of the DNA helix, facilitating insertion of UvrB beta-hairpin between the DNA strands. Then UvrB probes one DNA strand for the presence of a lesion. If a lesion is found the UvrA subunits dissociate and the UvrB-DNA preincision complex is formed. This complex is subsequently bound by UvrC and the second UvrB is released. If no lesion is found, the DNA wraps around the other UvrB subunit that will check the other stand for damage. The protein is UvrABC system protein B of Clostridium botulinum (strain 657 / Type Ba4).